The chain runs to 1145 residues: Protein sumv-2 (1145 aa).

Residues 1 to 13 show a composition bias toward basic residues; sequence MKPGRKSLPKKNR. Disordered stretches follow at residues 1 to 310, 429 to 464, 999 to 1025, 1040 to 1059, and 1073 to 1145; these read MKPG…APPA, QSRT…QKAR, HSAS…AGSE, QIAA…PRTE, and ITTG…ISLI. The segment covering 14 to 34 has biased composition (polar residues); it reads ASNITEKMPTTSTEAQSSSSK. 2 stretches are compositionally biased toward basic and acidic residues: residues 73–104 and 216–225; these read KTTE…EPRK and VPEKKPKIED. Positions 226–248 are enriched in low complexity; the sequence is APTTSSPKKSTPTSAPPTRASAR. The segment covering 455–464 has biased composition (basic and acidic residues); the sequence is GDEKRQQKAR. Positions 999–1013 are enriched in low complexity; sequence HSASSSAAPSPVGAS. Residues 1091 to 1102 show a composition bias toward basic and acidic residues; sequence VIERGDFRDHRP. A compositionally biased stretch (pro residues) spans 1121–1136; sequence QQPPLPSPAPPPPRGP.

Its function is as follows. Influences the activity of genes involved in vulval development. The chain is Protein sumv-2 from Caenorhabditis elegans.